Consider the following 473-residue polypeptide: Ribulose bisphosphate carboxylase large chain (473 aa).

The propeptide occupies 1 to 2 (MS). Pro-3 carries the N-acetylproline modification. Lys-14 carries the N6,N6,N6-trimethyllysine modification. Substrate contacts are provided by Asn-123 and Thr-173. The active-site Proton acceptor is Lys-175. Lys-177 serves as a coordination point for substrate. Lys-201, Asp-203, and Glu-204 together coordinate Mg(2+). At Lys-201 the chain carries N6-carboxylysine. Residue His-294 is the Proton acceptor of the active site. The substrate site is built by Arg-295, His-327, and Ser-379.

This sequence belongs to the RuBisCO large chain family. Type I subfamily. In terms of assembly, heterohexadecamer of 8 large chains and 8 small chains; disulfide-linked. The disulfide link is formed within the large subunit homodimers. It depends on Mg(2+) as a cofactor. Post-translationally, the disulfide bond which can form in the large chain dimeric partners within the hexadecamer appears to be associated with oxidative stress and protein turnover.

The protein resides in the plastid. It localises to the chloroplast. It carries out the reaction 2 (2R)-3-phosphoglycerate + 2 H(+) = D-ribulose 1,5-bisphosphate + CO2 + H2O. The enzyme catalyses D-ribulose 1,5-bisphosphate + O2 = 2-phosphoglycolate + (2R)-3-phosphoglycerate + 2 H(+). Its function is as follows. RuBisCO catalyzes two reactions: the carboxylation of D-ribulose 1,5-bisphosphate, the primary event in carbon dioxide fixation, as well as the oxidative fragmentation of the pentose substrate in the photorespiration process. Both reactions occur simultaneously and in competition at the same active site. This chain is Ribulose bisphosphate carboxylase large chain, found in Sesbania sesban (Egyptian riverhemp).